The primary structure comprises 177 residues: O-acetyl-ADP-ribose deacetylase (177 aa).

One can recognise a Macro domain in the interval 1 to 175 (MKTRIHVVQG…LYERLLTQQG (175 aa)). Substrate contacts are provided by residues 11–12 (DI), Asn-25, 33–35 (GVD), and 122–126 (STGVY). Asp-35 serves as the catalytic Proton acceptor.

Belongs to the MacroD-type family. YmdB subfamily. In terms of assembly, homodimer. Interacts with RNase III.

It catalyses the reaction 3''-O-acetyl-ADP-D-ribose + H2O = ADP-D-ribose + acetate + H(+). It carries out the reaction 2''-O-acetyl-ADP-D-ribose + H2O = ADP-D-ribose + acetate + H(+). In terms of biological role, deacetylates O-acetyl-ADP ribose to yield ADP-ribose and free acetate. Down-regulates ribonuclease 3 (RNase III) activity. Acts by interacting directly with the region of the ribonuclease that is required for dimerization/activation. The sequence is that of O-acetyl-ADP-ribose deacetylase from Shigella flexneri serotype 5b (strain 8401).